Reading from the N-terminus, the 213-residue chain is Small ribosomal subunit protein uS3c (213 aa).

The KH type-2 domain occupies 39–109; that stretch reads IRKYLNAKLA…KFRITITYLQ (71 aa).

It belongs to the universal ribosomal protein uS3 family. In terms of assembly, part of the 30S ribosomal subunit.

The protein resides in the plastid. It localises to the chloroplast. This chain is Small ribosomal subunit protein uS3c (rps3), found in Mesostigma viride (Green alga).